A 458-amino-acid chain; its full sequence is MSSKDNTCPPPGPGHINGFHVPHYAFFFPHMLGGMSXTGGLPGVQHQPPLSGYSTPSPATIETQSTSSEEIVPSPPTPPPLPRIYKPCFVCQDKSSGYHYGVSACEGCKGFFRRSIQKNMVYTCHRDKNCIINKVTRNRCQYCRLQKCFEVGMSKESVRNDRNKKKKESPKPEAIESYILSPETQDLIEKVQKAHQETFPALCQLGKYTTSFSSEQRVSLDIDLWDKFSELSTKCIIKTVEFAKQLPGFTTLTIADQITLLKSACLDILILRICTRYTPDQDTMTFSDGLTLNRTQMHNAGFGPLTDLVFAFANQPVPLEMDDAETGLLSAICLICGDRQDLEQPDKVDKLQEPLLEALKIYVRTRRPQKPHMFPKMLMKITDLRTVSAKGAERVITLKMEIPGAMPLIQEMLENSEGLDTLGGGASSDAPVTPVAPGSCSPSLSPSSTHSSPSTHSP.

Residues 1 to 87 are modulating; sequence MSSKDNTCPP…PPPLPRIYKP (87 aa). The disordered stretch occupies residues 39 to 78; that stretch reads GGLPGVQHQPPLSGYSTPSPATIETQSTSSEEIVPSPPTP. The segment covering 52 to 69 has biased composition (polar residues); it reads GYSTPSPATIETQSTSSE. NR C4-type zinc fingers lie at residues 88–108 and 124–148; these read CFVCQDKSSGYHYGVSACEGC and CHRDKNCIINKVTRNRCQYCRLQKC. Positions 88–153 form a DNA-binding region, nuclear receptor; that stretch reads CFVCQDKSSG…RLQKCFEVGM (66 aa). Residues 154–182 form a hinge region; it reads SKESVRNDRNKKKKESPKPEAIESYILSP. Positions 183 to 417 constitute an NR LBD domain; the sequence is ETQDLIEKVQ…LIQEMLENSE (235 aa). The short motif at 407 to 415 is the 9aaTAD element; sequence PLIQEMLEN. Positions 419-458 are disordered; sequence LDTLGGGASSDAPVTPVAPGSCSPSLSPSSTHSSPSTHSP. Residues 439–458 are compositionally biased toward low complexity; the sequence is SCSPSLSPSSTHSSPSTHSP.

It belongs to the nuclear hormone receptor family. NR1 subfamily. Heterodimer; with an rxr molecule. Binds DNA preferentially as a rar/rxr heterodimer.

The protein resides in the nucleus. Its function is as follows. Receptor for retinoic acid. Retinoic acid receptors bind as heterodimers to their target response elements in response to their ligands, all-trans or 9-cis retinoic acid, and regulate gene expression in various biological processes. The rar/rxr heterodimers bind to the retinoic acid response elements (RARE) composed of tandem 5'-AGGTCA-3' sites known as DR1-DR5. Required for primary neurogenesis and for anteroposterior neural patterning. This chain is Retinoic acid receptor alpha (rara), found in Xenopus laevis (African clawed frog).